Consider the following 204-residue polypeptide: Transcriptional regulator GfcR 1 (204 aa).

It belongs to the purine/pyrimidine phosphoribosyltransferase family. GfcR subfamily.

In Methanosarcina barkeri (strain Fusaro / DSM 804), this protein is Transcriptional regulator GfcR 1.